A 68-amino-acid polypeptide reads, in one-letter code: Molybdenum-pterin-binding protein 3 (68 aa).

The Mop domain maps to 2 to 68 (SISARNQLKG…IKSTDVMILA (67 aa)).

Its function is as follows. Binds one mole of molybdenum per mole of protein and contains a pterin. The sequence is that of Molybdenum-pterin-binding protein 3 (mopIII) from Clostridium pasteurianum.